The sequence spans 60 residues: SAPAQWKLWLVMDPRTVMIGTAAWLGVLALLIHFLLLGTERFNWIDTGLKEQKATAAAQA.

Over 1–16 the chain is Cytoplasmic; the sequence is SAPAQWKLWLVMDPRT. Residues 17-37 form a helical membrane-spanning segment; sequence VMIGTAAWLGVLALLIHFLLL. Position 33 (His-33) interacts with a bacteriochlorophyll. The Periplasmic portion of the chain corresponds to 38–60; that stretch reads GTERFNWIDTGLKEQKATAAAQA.

The protein belongs to the antenna complex alpha subunit family. As to quaternary structure, the core complex is formed by different alpha and beta chains, binding bacteriochlorophyll molecules, and arranged most probably in tetrameric structures disposed around the reaction center. The non-pigmented gamma chains may constitute additional components.

It localises to the cell inner membrane. Antenna complexes are light-harvesting systems, which transfer the excitation energy to the reaction centers. The sequence is that of Light-harvesting polypeptide B-885 alpha-2 chain from Rhodocyclus tenuis (Rhodospirillum tenue).